The chain runs to 424 residues: 3-phosphoshikimate 1-carboxyvinyltransferase (424 aa).

3-phosphoshikimate-binding residues include Lys21, Ser22, and Arg26. Lys21 contributes to the phosphoenolpyruvate binding site. Phosphoenolpyruvate-binding residues include Gly92 and Arg120. Residues Ser163, Ser164, Gln165, Ser191, Asp306, and Lys333 each coordinate 3-phosphoshikimate. Residue Gln165 coordinates phosphoenolpyruvate. Asp306 serves as the catalytic Proton acceptor. 3 residues coordinate phosphoenolpyruvate: Arg337, Arg379, and Lys405.

This sequence belongs to the EPSP synthase family. In terms of assembly, monomer.

It localises to the cytoplasm. It carries out the reaction 3-phosphoshikimate + phosphoenolpyruvate = 5-O-(1-carboxyvinyl)-3-phosphoshikimate + phosphate. It participates in metabolic intermediate biosynthesis; chorismate biosynthesis; chorismate from D-erythrose 4-phosphate and phosphoenolpyruvate: step 6/7. Catalyzes the transfer of the enolpyruvyl moiety of phosphoenolpyruvate (PEP) to the 5-hydroxyl of shikimate-3-phosphate (S3P) to produce enolpyruvyl shikimate-3-phosphate and inorganic phosphate. This chain is 3-phosphoshikimate 1-carboxyvinyltransferase, found in Clostridium perfringens (strain 13 / Type A).